The chain runs to 820 residues: Inhibitor of nuclear factor kappa-B kinase epsilon subunit homolog 1 (820 aa).

Residues 21 to 299 (LFNDESIGKG…TDIFEFQPVT (279 aa)) form the Protein kinase domain. Residues 27–35 (IGKGAYSEV) and Lys-49 contribute to the ATP site. The active-site Proton acceptor is Asp-149. The segment at 758–798 (SPNKEQFPKPEQDSILESSIDEGSTSFESTPPSSPPDVGSN) is disordered.

The protein belongs to the protein kinase superfamily. Ser/Thr protein kinase family. In terms of assembly, interacts with allo-1 (via N-terminus); the interaction is direct. Expressed in oocytes.

It is found in the cytoplasm. It catalyses the reaction L-seryl-[protein] + ATP = O-phospho-L-seryl-[protein] + ADP + H(+). The catalysed reaction is L-threonyl-[protein] + ATP = O-phospho-L-threonyl-[protein] + ADP + H(+). Its function is as follows. Serine/threonine-protein kinase, which plays a role in regulating allophagy, an autophagic process in which paternal organelles, including mitochondria and membranous organelles, are degraded in embryos. Phosphorylates the allophagy receptor allo-1, which is required for allophagy. This Caenorhabditis elegans protein is Inhibitor of nuclear factor kappa-B kinase epsilon subunit homolog 1.